A 96-amino-acid chain; its full sequence is UPF0213 protein Lreu_0682 (96 aa).

Residues glutamate 4–lysine 81 enclose the GIY-YIG domain.

Belongs to the UPF0213 family.

In Limosilactobacillus reuteri (strain DSM 20016) (Lactobacillus reuteri), this protein is UPF0213 protein Lreu_0682.